Here is a 458-residue protein sequence, read N- to C-terminus: Bifunctional protein GlmU (458 aa).

Positions Met1–Arg232 are pyrophosphorylase. Residues Leu10–Gly13, Lys24, Gln79, Gly84–Thr85, Tyr106–Asp108, Gly142, Glu157, Asn172, and Asn230 each bind UDP-N-acetyl-alpha-D-glucosamine. Asp108 serves as a coordination point for Mg(2+). Asn230 serves as a coordination point for Mg(2+). A linker region spans residues Gln233–Ala253. The N-acetyltransferase stretch occupies residues Gly254 to Lys458. 2 residues coordinate UDP-N-acetyl-alpha-D-glucosamine: Arg336 and Lys354. His366 (proton acceptor) is an active-site residue. Residues Tyr369 and Asn380 each coordinate UDP-N-acetyl-alpha-D-glucosamine. Acetyl-CoA-binding positions include Ala383, Asn389–Tyr390, Ser408, Ala426, and Arg443.

In the N-terminal section; belongs to the N-acetylglucosamine-1-phosphate uridyltransferase family. It in the C-terminal section; belongs to the transferase hexapeptide repeat family. As to quaternary structure, homotrimer. Mg(2+) serves as cofactor.

Its subcellular location is the cytoplasm. The catalysed reaction is alpha-D-glucosamine 1-phosphate + acetyl-CoA = N-acetyl-alpha-D-glucosamine 1-phosphate + CoA + H(+). It carries out the reaction N-acetyl-alpha-D-glucosamine 1-phosphate + UTP + H(+) = UDP-N-acetyl-alpha-D-glucosamine + diphosphate. Its pathway is nucleotide-sugar biosynthesis; UDP-N-acetyl-alpha-D-glucosamine biosynthesis; N-acetyl-alpha-D-glucosamine 1-phosphate from alpha-D-glucosamine 6-phosphate (route II): step 2/2. It functions in the pathway nucleotide-sugar biosynthesis; UDP-N-acetyl-alpha-D-glucosamine biosynthesis; UDP-N-acetyl-alpha-D-glucosamine from N-acetyl-alpha-D-glucosamine 1-phosphate: step 1/1. The protein operates within bacterial outer membrane biogenesis; LPS lipid A biosynthesis. Functionally, catalyzes the last two sequential reactions in the de novo biosynthetic pathway for UDP-N-acetylglucosamine (UDP-GlcNAc). The C-terminal domain catalyzes the transfer of acetyl group from acetyl coenzyme A to glucosamine-1-phosphate (GlcN-1-P) to produce N-acetylglucosamine-1-phosphate (GlcNAc-1-P), which is converted into UDP-GlcNAc by the transfer of uridine 5-monophosphate (from uridine 5-triphosphate), a reaction catalyzed by the N-terminal domain. In Psychrobacter arcticus (strain DSM 17307 / VKM B-2377 / 273-4), this protein is Bifunctional protein GlmU.